The primary structure comprises 382 residues: Gap junction alpha-1 protein (382 aa).

Residues G2 to K23 are Cytoplasmic-facing. The residue at position 5 (S5) is a Phosphoserine. A helical transmembrane segment spans residues V24 to A44. At W45–R76 the chain is on the extracellular side. 2 cysteine pairs are disulfide-bonded: C54–C192 and C187–C198. The chain crosses the membrane as a helical span at residues F77–F97. Residues Y98–Y155 are Cytoplasmic-facing. K144 participates in a covalent cross-link: Glycyl lysine isopeptide (Lys-Gly) (interchain with G-Cter in SUMO). Residues I156–I176 form a helical membrane-spanning segment. Residues Y177–T207 are Extracellular-facing. Residues I208–L228 form a helical membrane-spanning segment. Over F229 to I382 the chain is Cytoplasmic. K237 participates in a covalent cross-link: Glycyl lysine isopeptide (Lys-Gly) (interchain with G-Cter in SUMO). The interval S244–I382 is interaction with NOV. Residue Y247 is modified to Phosphotyrosine. 2 positions are modified to phosphoserine: S255 and S262. The tract at residues K264–I382 is interaction with UBQLN4. C271 carries the post-translational modification S-nitrosocysteine. Residue T275 is modified to Phosphothreonine. The interval S279–N300 is disordered. Phosphoserine occurs at positions 306 and 314. Polar residues predominate over residues Q317–A332. Residues Q317–I382 form a disordered region. S325 is subject to Phosphoserine; by CK1. T326 is subject to Phosphothreonine. S328 and S330 each carry phosphoserine; by CK1. A phosphoserine mark is found at S344 and S365. Positions R362–R374 are enriched in low complexity. S368 bears the Phosphoserine; by PKC/PRKCG and PKC/PRKCD mark. Phosphoserine occurs at positions 369 and 373.

It belongs to the connexin family. Alpha-type (group II) subfamily. A connexon is composed of a hexamer of connexins. Interacts with SGSM3. Interacts with RIC1/CIP150. Interacts with CNST and CSNK1D. Interacts (via C-terminus) with TJP1. Interacts (via C-terminus) with SRC (via SH3 domain). Interacts (not ubiquitinated) with UBQLN4 (via UBA domain). Interacts with NOV. Interacts with TMEM65. Interacts with ANK3/ANKG and PKP2. Post-translationally, phosphorylation at Ser-325, Ser-328 and Ser-330 by CK1 modulates gap junction assembly. Phosphorylated at Ser-368 by PRKCG; phosphorylation induces disassembly of gap junction plaques and inhibition of gap junction activity. Phosphorylation at Ser-368 by PRKCD triggers its internalization into small vesicles leading to proteasome-mediated degradation. In terms of processing, sumoylated with SUMO1, SUMO2 and SUMO3, which may regulate the level of functional Cx43 gap junctions at the plasma membrane. May be desumoylated by SENP1 or SENP2. S-nitrosylation at Cys-271 is enriched at the muscle endothelial gap junction in arteries, it augments channel permeability and may regulate of smooth muscle cell to endothelial cell communication. Post-translationally, acetylated in the developing cortex; leading to delocalization from the cell membrane.

It localises to the cell membrane. The protein resides in the cell junction. Its subcellular location is the gap junction. It is found in the endoplasmic reticulum. Gap junction protein that acts as a regulator of bladder capacity. A gap junction consists of a cluster of closely packed pairs of transmembrane channels, the connexons, through which materials of low MW diffuse from one cell to a neighboring cell. May play a critical role in the physiology of hearing by participating in the recycling of potassium to the cochlear endolymph. Negative regulator of bladder functional capacity: acts by enhancing intercellular electrical and chemical transmission, thus sensitizing bladder muscles to cholinergic neural stimuli and causing them to contract. May play a role in cell growth inhibition through the regulation of NOV expression and localization. Plays an essential role in gap junction communication in the ventricles. The protein is Gap junction alpha-1 protein (GJA1) of Macaca fascicularis (Crab-eating macaque).